We begin with the raw amino-acid sequence, 66 residues long: MNVTVMFLVLLLTMPLTDGFNIRAINGGELFGLVQRDAGNALDHGFYRRGDCPPWCVGARCRAGKC.

Residues 1–19 (MNVTVMFLVLLLTMPLTDG) form the signal peptide. Positions 20-47 (FNIRAINGGELFGLVQRDAGNALDHGFY) are excised as a propeptide.

The protein belongs to the conotoxin L superfamily. Contains 2 disulfide bonds. As to expression, expressed by the venom duct.

Its subcellular location is the secreted. The chain is Conotoxin Cl14.1b from Californiconus californicus (California cone).